Consider the following 121-residue polypeptide: Apoptin (121 aa).

2 disordered regions span residues M1–P28 and L57–L121. Over residues R58–F70 the composition is skewed to polar residues. Positions R88–E102 are enriched in basic and acidic residues.

Belongs to the gyrovirus apoptin family.

The protein resides in the host nucleus. Functionally, may act as transcriptional regulator. Induces apoptosis in infected cells. Element of infectious replication cycle. The protein is Apoptin (VP3) of Gallus gallus (Chicken).